Here is a 294-residue protein sequence, read N- to C-terminus: MHPRFQTAFAQLADNLQSALAPILADHHFPAMLTAEQVSTLKNTAGLDEDALAFALLPLAAACARTDLSHFNVGAIARGVSGNWYFGANMEFLGATMQQTVHAEQSAISHAWLRGEKGLAAVTVNYTPCGHCRQFMNELNSGLDLRIHLPGRAPHTLRDYLPDAFGPKDLEIKTLLMDEQDHGFTLTGDTLTQAAITAANKSHMPYSHSPSGVALECKDGRIFTGSYAENAAFNPTLPPLQGALNLLSLNGYNYADIQRAILAEKGDAALIQWDATAATLKALGCHNIDRVLLG.

CMP/dCMP-type deaminase domains are found at residues 48–168 (DEDA…FGPK) and 186–294 (LTGD…VLLG). A substrate-binding site is contributed by 89–91 (NME). A Zn(2+)-binding site is contributed by H102. Catalysis depends on E104, which acts as the Proton donor. Zn(2+)-binding residues include C129 and C132.

The protein belongs to the cytidine and deoxycytidylate deaminase family. In terms of assembly, homodimer. It depends on Zn(2+) as a cofactor.

The catalysed reaction is cytidine + H2O + H(+) = uridine + NH4(+). It catalyses the reaction 2'-deoxycytidine + H2O + H(+) = 2'-deoxyuridine + NH4(+). This enzyme scavenges exogenous and endogenous cytidine and 2'-deoxycytidine for UMP synthesis. This Salmonella agona (strain SL483) protein is Cytidine deaminase.